A 143-amino-acid chain; its full sequence is Transcriptional regulator SlyA (143 aa).

The HTH marR-type domain maps to 2–135; that stretch reads ESTLGSDLAR…LSGLIDKLEK (134 aa). The H-T-H motif DNA-binding region spans 49 to 72; sequence QIQLAKAIGIEQPSLVRTLDQLEE.

This sequence belongs to the SlyA family. In terms of assembly, homodimer.

Its function is as follows. Transcription regulator that can specifically activate or repress expression of target genes. The sequence is that of Transcriptional regulator SlyA from Yersinia pestis bv. Antiqua (strain Antiqua).